A 78-amino-acid chain; its full sequence is Translational regulator CsrA (78 aa).

This sequence belongs to the CsrA/RsmA family. Homodimer; the beta-strands of each monomer intercalate to form a hydrophobic core, while the alpha-helices form wings that extend away from the core.

The protein localises to the cytoplasm. Functionally, a translational regulator that binds mRNA to regulate translation initiation and/or mRNA stability. Usually binds in the 5'-UTR at or near the Shine-Dalgarno sequence preventing ribosome-binding, thus repressing translation. Its main target seems to be the major flagellin gene, while its function is anatagonized by FliW. The chain is Translational regulator CsrA from Caldicellulosiruptor bescii (strain ATCC BAA-1888 / DSM 6725 / KCTC 15123 / Z-1320) (Anaerocellum thermophilum).